The following is an 82-amino-acid chain: Cytochrome b559 subunit alpha (82 aa).

A helical membrane pass occupies residues 22–36 (IIHAVTLPAIFIAGF). Residue histidine 24 participates in heme binding.

Belongs to the PsbE/PsbF family. In terms of assembly, heterodimer of an alpha subunit and a beta subunit. PSII is composed of 1 copy each of membrane proteins PsbA, PsbB, PsbC, PsbD, PsbE, PsbF, PsbH, PsbI, PsbJ, PsbK, PsbL, PsbM, PsbT, PsbX, PsbY, Psb30/Ycf12, peripheral proteins PsbO, CyanoQ (PsbQ), PsbU, PsbV and a large number of cofactors. It forms dimeric complexes. The cofactor is heme b.

It is found in the cellular thylakoid membrane. This b-type cytochrome is tightly associated with the reaction center of photosystem II (PSII). PSII is a light-driven water:plastoquinone oxidoreductase that uses light energy to abstract electrons from H(2)O, generating O(2) and a proton gradient subsequently used for ATP formation. It consists of a core antenna complex that captures photons, and an electron transfer chain that converts photonic excitation into a charge separation. The polypeptide is Cytochrome b559 subunit alpha (Prochlorococcus marinus (strain MIT 9211)).